Here is a 128-residue protein sequence, read N- to C-terminus: Transcription antitermination protein NusB (128 aa).

The protein belongs to the NusB family.

In terms of biological role, involved in transcription antitermination. Required for transcription of ribosomal RNA (rRNA) genes. Binds specifically to the boxA antiterminator sequence of the ribosomal RNA (rrn) operons. The chain is Transcription antitermination protein NusB from Listeria monocytogenes serotype 4b (strain CLIP80459).